Here is a 388-residue protein sequence, read N- to C-terminus: Cell adhesion molecule 4 (388 aa).

The N-terminal stretch at 1–20 (MGRARRFQWPLLLLWAAAAG) is a signal peptide. One can recognise an Ig-like V-type domain in the interval 21–119 (PGTAQEVQTE…DTHHQIATLT (99 aa)). Residues 25–324 (QEVQTENVTV…VEAQTSVPYA (300 aa)) are Extracellular-facing. 2 N-linked (GlcNAc...) asparagine glycosylation sites follow: asparagine 31 and asparagine 67. Cystine bridges form between cysteine 44/cysteine 104, cysteine 145/cysteine 199, and cysteine 245/cysteine 291. Ig-like C2-type domains lie at 124 to 219 (PENP…YVLD) and 224 to 307 (PTAR…YVLV). The N-linked (GlcNAc...) asparagine glycan is linked to asparagine 286. The chain crosses the membrane as a helical span at residues 325–345 (IVGGILALLVFLIICVLVGMV). Residues 346–388 (WCSVRQKGSYLTHEASGLDEQGEAREAFLNGSDGHKRKEEFFI) are Cytoplasmic-facing. Serine 361 carries the phosphoserine modification.

The protein belongs to the nectin family. As to quaternary structure, monomer and homodimer. Post-translationally, N-glycosylated.

It is found in the membrane. Involved in the cell-cell adhesion. Has calcium- and magnesium-independent cell-cell adhesion activity. May have tumor-suppressor activity. The sequence is that of Cell adhesion molecule 4 (Cadm4) from Rattus norvegicus (Rat).